The following is a 362-amino-acid chain: DNA replication and repair protein RecF (362 aa).

Residue 30-37 (GDNAQGKT) coordinates ATP.

The protein belongs to the RecF family.

It is found in the cytoplasm. Its function is as follows. The RecF protein is involved in DNA metabolism; it is required for DNA replication and normal SOS inducibility. RecF binds preferentially to single-stranded, linear DNA. It also seems to bind ATP. This is DNA replication and repair protein RecF from Agathobacter rectalis (strain ATCC 33656 / DSM 3377 / JCM 17463 / KCTC 5835 / VPI 0990) (Eubacterium rectale).